A 371-amino-acid chain; its full sequence is F-box protein At2g26850 (371 aa).

Positions 59–105 (KMSILDLPDLPLDCILELLPPSELCTMARVCSSLRERCVSDHLWEKH) constitute an F-box domain.

This Arabidopsis thaliana (Mouse-ear cress) protein is F-box protein At2g26850.